The chain runs to 66 residues: Toxin Boma6a (66 aa).

The region spanning 2-64 (RDAYIAQNYN…VPIKVEGKCH (63 aa)) is the LCN-type CS-alpha/beta domain. Intrachain disulfides connect C12–C63, C16–C36, C22–C46, and C26–C48.

This sequence belongs to the long (4 C-C) scorpion toxin superfamily. Sodium channel inhibitor family. Alpha subfamily. Expressed by the venom gland.

It localises to the secreted. Functionally, alpha toxins bind voltage-independently at site-3 of sodium channels (Nav) and inhibit the inactivation of the activated channels, thereby blocking neuronal transmission. This Buthus occitanus mardochei (Moroccan scorpion) protein is Toxin Boma6a.